Reading from the N-terminus, the 216-residue chain is Peptide methionine sulfoxide reductase MsrA (216 aa).

Residue Cys-54 is part of the active site.

This sequence belongs to the MsrA Met sulfoxide reductase family.

It carries out the reaction L-methionyl-[protein] + [thioredoxin]-disulfide + H2O = L-methionyl-(S)-S-oxide-[protein] + [thioredoxin]-dithiol. It catalyses the reaction [thioredoxin]-disulfide + L-methionine + H2O = L-methionine (S)-S-oxide + [thioredoxin]-dithiol. Its function is as follows. Has an important function as a repair enzyme for proteins that have been inactivated by oxidation. Catalyzes the reversible oxidation-reduction of methionine sulfoxide in proteins to methionine. The chain is Peptide methionine sulfoxide reductase MsrA from Xanthomonas campestris pv. campestris (strain 8004).